The following is a 136-amino-acid chain: Small ribosomal subunit protein uS8c (136 aa).

Belongs to the universal ribosomal protein uS8 family. Part of the 30S ribosomal subunit.

The protein resides in the plastid. It localises to the chloroplast. One of the primary rRNA binding proteins, it binds directly to 16S rRNA central domain where it helps coordinate assembly of the platform of the 30S subunit. The protein is Small ribosomal subunit protein uS8c (rps8) of Saccharum officinarum (Sugarcane).